We begin with the raw amino-acid sequence, 822 residues long: Fibroblast growth factor receptor 1 (822 aa).

Positions 1-21 (MWGWKCLLFWAVLVTATLCTA) are cleaved as a signal peptide. The Extracellular segment spans residues 22 to 376 (RPAPTLPEQA…AVMTSPLYLE (355 aa)). The region spanning 25–119 (PTLPEQAQPW…DTTYFSVNVS (95 aa)) is the Ig-like C2-type 1 domain. Cysteines 55 and 101 form a disulfide. 2 N-linked (GlcNAc...) asparagine glycosylation sites follow: Asn77 and Asn117. Residues 120-162 (DALPSSEDDDDDDDSSSEEKETDNTKPNRRPVAPYWTSPEKME) form a disordered region. Residues 125–135 (SEDDDDDDDSS) are compositionally biased toward acidic residues. Residues 136–145 (SEEKETDNTK) show a composition bias toward basic and acidic residues. 2 Ig-like C2-type domains span residues 158 to 246 (PEKM…YQLD) and 255 to 357 (PILQ…AWLT). The segment at 160-177 (KMEKKLHAVPAAKTVKFK) is heparin-binding. Residues Cys178 and Cys230 are joined by a disulfide bond. N-linked (GlcNAc...) asparagine glycosylation is found at Asn227, Asn240, Asn264, Asn296, Asn317, and Asn330. Cys277 and Cys341 form a disulfide bridge. A helical transmembrane segment spans residues 377 to 397 (IIIYCTGAFLISCMLGSVIIY). At 398-822 (KMKSGTKKSD…QLANSGLKRR (425 aa)) the chain is on the cytoplasmic side. Position 463 is a phosphotyrosine; by autocatalysis (Tyr463). Residues 478–767 (LVLGKPLGEG…VALTSNQEYL (290 aa)) form the Protein kinase domain. Residues 484–490 (LGEGCFG), Lys514, 562–564 (EYA), and Asn568 each bind ATP. Residues Tyr583 and Tyr585 each carry the phosphotyrosine; by autocatalysis modification. Residue Asp623 is the Proton acceptor of the active site. ATP is bound by residues Arg627 and Asp641. Phosphotyrosine; by autocatalysis occurs at positions 653, 654, 730, and 766. Over residues 782-792 (DTRSSTCSSGE) the composition is skewed to polar residues. Residues 782–822 (DTRSSTCSSGEDSVFSHEPLPEEPCLPRHPTQLANSGLKRR) are disordered.

It belongs to the protein kinase superfamily. Tyr protein kinase family. Fibroblast growth factor receptor subfamily. Monomer. Homodimer after ligand binding. Interacts predominantly with FGF1 and FGF2, but can also interact with FGF3, FGF4, FGF5, FGF6, FGF8, FGF10, FGF19, FGF21, FGF22 and FGF23 (in vitro). Ligand specificity is determined by tissue-specific expression of isoforms, and differences in the third Ig-like domain are crucial for ligand specificity. Affinity for fibroblast growth factors (FGFs) is increased by heparan sulfate glycosaminoglycans that function as coreceptors. Likewise, KLB increases the affinity for FGF19, FGF21 and FGF23. Interacts (phosphorylated on Tyr-766) with PLCG1 (via SH2 domains). Interacts with FRS2. Interacts with RPS6KA1. Interacts (via C-terminus) with NEDD4 (via WW3 domain). Interacts with KL. Interacts with SHB (via SH2 domain). Interacts with GRB10. Interacts with ANOS1; this interaction does not interfere with FGF2-binding to FGFR1, but prevents binding of heparin-bound FGF2. Interacts with SOX2 and SOX3. Interacts with FLRT1, FLRT2 and FLRT3. Found in a ternary complex with FGF1 and ITGAV:ITGB3. Autophosphorylated. Binding of FGF family members together with heparan sulfate proteoglycan or heparin promotes receptor dimerization and autophosphorylation on tyrosine residues. Autophosphorylation occurs in trans between the two FGFR molecules present in the dimer and proceeds in a highly ordered manner. Initial autophosphorylation at Tyr-653 increases the kinase activity by a factor of 50 to 100. After this, Tyr-583 becomes phosphorylated, followed by phosphorylation of Tyr-463, Tyr-766, Tyr-583 and Tyr-585. In a third stage, Tyr-654 is autophosphorylated, resulting in a further tenfold increase of kinase activity. Phosphotyrosine residues provide docking sites for interacting proteins and so are crucial for FGFR1 function and its regulation. Post-translationally, ubiquitinated. FGFR1 is rapidly ubiquitinated by NEDD4 after autophosphorylation, leading to internalization and lysosomal degradation. CBL is recruited to activated FGFR1 via FRS2 and GRB2, and mediates ubiquitination and subsequent degradation of FGFR1. In terms of processing, N-glycosylated in the endoplasmic reticulum. The N-glycan chains undergo further maturation to an Endo H-resistant form in the Golgi apparatus. In terms of tissue distribution, widely expressed.

It localises to the cell membrane. The protein resides in the nucleus. Its subcellular location is the cytoplasm. It is found in the cytosol. The protein localises to the cytoplasmic vesicle. The enzyme catalyses L-tyrosyl-[protein] + ATP = O-phospho-L-tyrosyl-[protein] + ADP + H(+). Its activity is regulated as follows. Present in an inactive conformation in the absence of bound ligand. Ligand binding leads to dimerization and activation by sequential autophosphorylation on tyrosine residues. Functionally, tyrosine-protein kinase that acts as a cell-surface receptor for fibroblast growth factors and plays an essential role in the regulation of embryonic development, cell proliferation, differentiation and migration. Required for normal mesoderm patterning and correct axial organization during embryonic development, normal skeletogenesis and normal development of the gonadotropin-releasing hormone (GnRH) neuronal system. Phosphorylates PLCG1, FRS2, GAB1 and SHB. Ligand binding leads to the activation of several signaling cascades. Activation of PLCG1 leads to the production of the cellular signaling molecules diacylglycerol and inositol 1,4,5-trisphosphate. Phosphorylation of FRS2 triggers recruitment of GRB2, GAB1, PIK3R1 and SOS1, and mediates activation of RAS, MAPK1/ERK2, MAPK3/ERK1 and the MAP kinase signaling pathway, as well as of the AKT1 signaling pathway. Promotes phosphorylation of SHC1, STAT1 and PTPN11/SHP2. In the nucleus, enhances RPS6KA1 and CREB1 activity and contributes to the regulation of transcription. FGFR1 signaling is down-regulated by IL17RD/SEF, and by FGFR1 ubiquitination, internalization and degradation. This chain is Fibroblast growth factor receptor 1 (Fgfr1), found in Mus musculus (Mouse).